Reading from the N-terminus, the 373-residue chain is Dual-specificity RNA methyltransferase RlmN (373 aa).

Glutamate 94 functions as the Proton acceptor in the catalytic mechanism. A Radical SAM core domain is found at 100-339 (EDDRATLCVS…VIVRKTRGDD (240 aa)). An intrachain disulfide couples cysteine 107 to cysteine 344. [4Fe-4S] cluster contacts are provided by cysteine 114, cysteine 118, and cysteine 121. S-adenosyl-L-methionine is bound by residues 168 to 169 (GE), serine 200, 222 to 224 (SIH), and asparagine 301. Cysteine 344 (S-methylcysteine intermediate) is an active-site residue.

Belongs to the radical SAM superfamily. RlmN family. Requires [4Fe-4S] cluster as cofactor.

It localises to the cytoplasm. The catalysed reaction is adenosine(2503) in 23S rRNA + 2 reduced [2Fe-2S]-[ferredoxin] + 2 S-adenosyl-L-methionine = 2-methyladenosine(2503) in 23S rRNA + 5'-deoxyadenosine + L-methionine + 2 oxidized [2Fe-2S]-[ferredoxin] + S-adenosyl-L-homocysteine. The enzyme catalyses adenosine(37) in tRNA + 2 reduced [2Fe-2S]-[ferredoxin] + 2 S-adenosyl-L-methionine = 2-methyladenosine(37) in tRNA + 5'-deoxyadenosine + L-methionine + 2 oxidized [2Fe-2S]-[ferredoxin] + S-adenosyl-L-homocysteine. Specifically methylates position 2 of adenine 2503 in 23S rRNA and position 2 of adenine 37 in tRNAs. m2A2503 modification seems to play a crucial role in the proofreading step occurring at the peptidyl transferase center and thus would serve to optimize ribosomal fidelity. The protein is Dual-specificity RNA methyltransferase RlmN of Shewanella oneidensis (strain ATCC 700550 / JCM 31522 / CIP 106686 / LMG 19005 / NCIMB 14063 / MR-1).